A 148-amino-acid polypeptide reads, in one-letter code: Gametocyte-specific factor 1-like (148 aa).

2 CHHC U11-48K-type zinc fingers span residues 6 to 33 (FEIC…RRKN) and 40 to 67 (MATC…VNRS). Zn(2+) is bound by residues cysteine 9, histidine 15, histidine 25, cysteine 29, cysteine 43, histidine 49, histidine 59, and cysteine 63. Residues 67–99 (SAVEEEDTENPLKVSPPSSEQNDDTQQVSPCLP) are disordered. Polar residues predominate over residues 82 to 95 (PPSSEQNDDTQQVS).

This sequence belongs to the UPF0224 (FAM112) family.

This chain is Gametocyte-specific factor 1-like (GTSF1L), found in Homo sapiens (Human).